Here is a 105-residue protein sequence, read N- to C-terminus: Large ribosomal subunit protein uL24 (105 aa).

The protein belongs to the universal ribosomal protein uL24 family. Part of the 50S ribosomal subunit.

In terms of biological role, one of two assembly initiator proteins, it binds directly to the 5'-end of the 23S rRNA, where it nucleates assembly of the 50S subunit. Functionally, one of the proteins that surrounds the polypeptide exit tunnel on the outside of the subunit. The chain is Large ribosomal subunit protein uL24 from Vibrio atlanticus (strain LGP32) (Vibrio splendidus (strain Mel32)).